Reading from the N-terminus, the 374-residue chain is Pectate lyase 1 (374 aa).

A signal peptide spans 1-22 (MKYLLPSAAAGLLLLAAQPTMA). C93 and C176 are oxidised to a cystine. Ca(2+)-binding residues include D150, D152, E187, and D191. R239 is a catalytic residue. C350 and C373 are disulfide-bonded.

This sequence belongs to the polysaccharide lyase 1 family. PLADES subfamily. Ca(2+) serves as cofactor.

It is found in the secreted. It catalyses the reaction Eliminative cleavage of (1-&gt;4)-alpha-D-galacturonan to give oligosaccharides with 4-deoxy-alpha-D-galact-4-enuronosyl groups at their non-reducing ends.. Its pathway is glycan metabolism; pectin degradation; 2-dehydro-3-deoxy-D-gluconate from pectin: step 2/5. In terms of biological role, involved in maceration and soft-rotting of plant tissue. The chain is Pectate lyase 1 (pel1) from Pectobacterium carotovorum (Erwinia carotovora).